Reading from the N-terminus, the 231-residue chain is 5'-methylthioadenosine/S-adenosylhomocysteine nucleosidase (231 aa).

The Proton acceptor role is filled by glutamate 12. Substrate-binding positions include glycine 78, valine 153, and 174–175 (ME). The Proton donor role is filled by aspartate 198.

This sequence belongs to the PNP/UDP phosphorylase family. MtnN subfamily.

The enzyme catalyses S-adenosyl-L-homocysteine + H2O = S-(5-deoxy-D-ribos-5-yl)-L-homocysteine + adenine. The catalysed reaction is S-methyl-5'-thioadenosine + H2O = 5-(methylsulfanyl)-D-ribose + adenine. It catalyses the reaction 5'-deoxyadenosine + H2O = 5-deoxy-D-ribose + adenine. Its pathway is amino-acid biosynthesis; L-methionine biosynthesis via salvage pathway; S-methyl-5-thio-alpha-D-ribose 1-phosphate from S-methyl-5'-thioadenosine (hydrolase route): step 1/2. Functionally, catalyzes the irreversible cleavage of the glycosidic bond in both 5'-methylthioadenosine (MTA) and S-adenosylhomocysteine (SAH/AdoHcy) to adenine and the corresponding thioribose, 5'-methylthioribose and S-ribosylhomocysteine, respectively. Also cleaves 5'-deoxyadenosine, a toxic by-product of radical S-adenosylmethionine (SAM) enzymes, into 5-deoxyribose and adenine. The protein is 5'-methylthioadenosine/S-adenosylhomocysteine nucleosidase of Vibrio parahaemolyticus serotype O3:K6 (strain RIMD 2210633).